The sequence spans 801 residues: Phenylalanine--tRNA ligase beta subunit (801 aa).

Positions 39 to 153 (AEGLSKLVVG…DEAVPGDAIF (115 aa)) constitute a tRNA-binding domain. A B5 domain is found at 406-481 (TEPVEVSTNL…RIYGYDKLPT (76 aa)). D459, D465, E468, and E469 together coordinate Mg(2+). The region spanning 708-801 (TKFPAMTRDI…LTEQVGAEVR (94 aa)) is the FDX-ACB domain.

It belongs to the phenylalanyl-tRNA synthetase beta subunit family. Type 1 subfamily. As to quaternary structure, tetramer of two alpha and two beta subunits. Mg(2+) serves as cofactor.

The protein localises to the cytoplasm. The catalysed reaction is tRNA(Phe) + L-phenylalanine + ATP = L-phenylalanyl-tRNA(Phe) + AMP + diphosphate + H(+). This is Phenylalanine--tRNA ligase beta subunit from Streptococcus pyogenes serotype M3 (strain SSI-1).